A 602-amino-acid polypeptide reads, in one-letter code: Myotubularin (602 aa).

Residues 1–16 (MATSSTPKYNSNSLEN) are compositionally biased toward polar residues. Residues 1 to 33 (MATSSTPKYNSNSLENSVRRSPGDGINHEQNDE) are disordered. Residues 17-33 (SVRRSPGDGINHEQNDE) are compositionally biased toward basic and acidic residues. Residues 28 to 96 (HEQNDEISRL…GVIARIEKMG (69 aa)) enclose the GRAM domain. In terms of domain architecture, Myotubularin phosphatase spans 162 to 537 (GWAVYDAMTE…RHLELWVNYY (376 aa)). A 1,2-diacyl-sn-glycero-3-phospho-(1D-myo-inositol-3,5-bisphosphate) is bound by residues N287, N312, and I313. A 1,2-diacyl-sn-glycero-3-phospho-(1D-myo-inositol-3-phosphate) contacts are provided by N287, N312, and I313. Residue C374 is the Phosphocysteine intermediate of the active site. A 1,2-diacyl-sn-glycero-3-phospho-(1D-myo-inositol-3,5-bisphosphate) contacts are provided by S375, D376, G377, W378, D379, R380, K416, and R420. The a 1,2-diacyl-sn-glycero-3-phospho-(1D-myo-inositol-3-phosphate) site is built by S375, D376, G377, W378, D379, and R380. R420 is an a 1,2-diacyl-sn-glycero-3-phospho-(1D-myo-inositol-3-phosphate) binding site. Positions 577 to 602 (NSPKINRSTTSPSSPSQMMPQVQTPF) are disordered. The span at 584–602 (STTSPSSPSQMMPQVQTPF) shows a compositional bias: low complexity.

This sequence belongs to the protein-tyrosine phosphatase family. Non-receptor class myotubularin subfamily.

The protein resides in the cytoplasm. It localises to the cell membrane. The protein localises to the cell projection. Its subcellular location is the filopodium. It is found in the ruffle. The protein resides in the late endosome. It localises to the myofibril. The protein localises to the sarcomere. It catalyses the reaction a 1,2-diacyl-sn-glycero-3-phospho-(1D-myo-inositol-3-phosphate) + H2O = a 1,2-diacyl-sn-glycero-3-phospho-(1D-myo-inositol) + phosphate. The enzyme catalyses a 1,2-diacyl-sn-glycero-3-phospho-(1D-myo-inositol-3,5-bisphosphate) + H2O = a 1,2-diacyl-sn-glycero-3-phospho-(1D-myo-inositol-5-phosphate) + phosphate. It carries out the reaction 1,2-dioctanoyl-sn-glycero-3-phospho-(1-D-myo-inositol-3-phosphate) + H2O = 1,2-dioctanoyl-sn-glycero-3-phospho-(1D-myo-inositol) + phosphate. The catalysed reaction is 1,2-dioctanoyl-sn-glycero-3-phospho-(1D-myo-inositol-3,5-bisphosphate) + H2O = 1,2-dioctanoyl-sn-glycero-3-phospho-(1D-myo-inositol-5-phosphate) + phosphate. It catalyses the reaction 1,2-dihexadecanoyl-sn-glycero-3-phospho-(1D-myo-inositol-3,5-phosphate) + H2O = 1,2-dihexadecanoyl-sn-glycero-3-phospho-(1D-myo-inositol-5-phosphate) + phosphate. Its function is as follows. Lipid phosphatase which dephosphorylates phosphatidylinositol 3-monophosphate (PI3P) and phosphatidylinositol 3,5-bisphosphate (PI(3,5)P2). The sequence is that of Myotubularin (mtm1) from Xenopus laevis (African clawed frog).